Reading from the N-terminus, the 301-residue chain is MNKFDSKTFQGLILSLQDYWARQGCVIIQPLDMEVGAGTFHPMTFLRSIGPEPISSAYVQPCRRPTDGRYGENPNRLQHYYQFQVMLKPSPSNIQELYLGSLKELGFDPLVHDIRFVEDNWESPTLGAWGLGWEVWLNGMEVTQFTYFQQVGGIECSPVTGEITYGLERLAMYIQGVDSIYDLVWTDGPMGKVTYGDVFHQNEVEQSTYNFEYADVDALFGMFDHCEKESQKMIEAGLPLPAYEQVMKASHAFNLLDARHAISVTERQRYILRVRTLSKACAEAYYQAREKLGFPMCKKEA.

It belongs to the class-II aminoacyl-tRNA synthetase family. Tetramer of two alpha and two beta subunits.

It localises to the cytoplasm. The catalysed reaction is tRNA(Gly) + glycine + ATP = glycyl-tRNA(Gly) + AMP + diphosphate. This is Glycine--tRNA ligase alpha subunit from Pseudoalteromonas atlantica (strain T6c / ATCC BAA-1087).